The sequence spans 355 residues: MTKSYSESGLMGEPQPQGPPSWTDECLSSQDEDHEADKKEDELEAMNAEEDSLRNGGDEEDEDEDLEEEDEEEEEDDQKPKRRGPKKKKMTKARLERFKLRRMKANARERNRMHGLNAALDNLRKVVPCYSKTQKLSKIETLRLAKNYIWALSEILRSGKSPDLVSFVQTLCKGLSQPTTNLVAGCLQLNPRTFLPEQNPDMPPHLPTASASFPVHPYSYQSPGLPSPPYGTMDSSHVFQVKPPPHAYSATLEPFFESPLTDCTSPSFDGPLSPPLSINGNFSFKHEPSAEFEKNYAFTMHYPAATLAGPQSHGSIFSGATAPRCEIPIDNIMSFDSHSHHERVMSAQLNAIFHD.

The interval 1-93 is disordered; it reads MTKSYSESGL…GPKKKKMTKA (93 aa). A compositionally biased stretch (acidic residues) spans 58–77; it reads DEEDEDEDLEEEDEEEEEDD. Positions 80–92 are enriched in basic residues; it reads PKRRGPKKKKMTK. The Nuclear localization signal signature appears at 86–92; it reads KKKKMTK. A bHLH domain is found at 100-152; sequence LRRMKANARERNRMHGLNAALDNLRKVVPCYSKTQKLSKIETLRLAKNYIWAL. Ser161, Ser258, Ser265, and Ser273 each carry phosphoserine. The residue at position 334 (Ser334) is a Phosphoserine; by CaMK2.

As to quaternary structure, efficient DNA-binding requires dimerization with another bHLH protein. Heterodimer with TCF3/E47; the heterodimer is inhibited in presence of ID2, but not NR0B2, to E-box element. Interacts with EP300; the interaction is inhibited by NR0B2. Interacts with RREB1. Interacts with ATOH8. In terms of processing, phosphorylated. In islet cells, phosphorylated on Ser-273 upon glucose stimulation; which may be required for nuclear localization. In activated neurons, phosphorylated on Ser-334; which promotes dendritic growth. Phosphorylated by MAPK1; phosphorylation regulates heterodimerization and DNA-binding activities. Phosphorylation on Ser-265 and Ser-273 increases transactivation on the insulin promoter in glucose-stimulated insulinoma cells. Most abundant in pancreatic alpha- and beta-cells, less in brain and intestine.

It is found in the cytoplasm. The protein localises to the nucleus. In terms of biological role, acts as a transcriptional activator: mediates transcriptional activation by binding to E box-containing promoter consensus core sequences 5'-CANNTG-3'. Associates with the p300/CBP transcription coactivator complex to stimulate transcription of the secretin gene as well as the gene encoding the cyclin-dependent kinase inhibitor CDKN1A. Contributes to the regulation of several cell differentiation pathways, like those that promote the formation of early retinal ganglion cells, inner ear sensory neurons, granule cells forming either the cerebellum or the dentate gyrus cell layer of the hippocampus, endocrine islet cells of the pancreas and enteroendocrine cells of the small intestine. Together with PAX6 or SIX3, is required for the regulation of amacrine cell fate specification. Also required for dendrite morphogenesis and maintenance in the cerebellar cortex. Associates with chromatin to enhancer regulatory elements in genes encoding key transcriptional regulators of neurogenesis. The chain is Neurogenic differentiation factor 1 (NEUROD1) from Mesocricetus auratus (Golden hamster).